A 255-amino-acid polypeptide reads, in one-letter code: Triosephosphate isomerase (255 aa).

A substrate-binding site is contributed by 9-11 (NWK). His96 acts as the Electrophile in catalysis. The active-site Proton acceptor is the Glu170. Residues Gly176, Ser216, and 237 to 238 (GG) each bind substrate.

The protein belongs to the triosephosphate isomerase family. In terms of assembly, homodimer.

It is found in the cytoplasm. It carries out the reaction D-glyceraldehyde 3-phosphate = dihydroxyacetone phosphate. Its pathway is carbohydrate biosynthesis; gluconeogenesis. It functions in the pathway carbohydrate degradation; glycolysis; D-glyceraldehyde 3-phosphate from glycerone phosphate: step 1/1. In terms of biological role, involved in the gluconeogenesis. Catalyzes stereospecifically the conversion of dihydroxyacetone phosphate (DHAP) to D-glyceraldehyde-3-phosphate (G3P). This is Triosephosphate isomerase from Magnetococcus marinus (strain ATCC BAA-1437 / JCM 17883 / MC-1).